We begin with the raw amino-acid sequence, 207 residues long: Holliday junction resolvase RecU (207 aa).

The disordered stretch occupies residues 1–21 (MTIRYPNGQVYRQPGPTKSKS). Mg(2+) is bound by residues T87, D89, E102, and Q121.

This sequence belongs to the RecU family. Requires Mg(2+) as cofactor.

The protein localises to the cytoplasm. The catalysed reaction is Endonucleolytic cleavage at a junction such as a reciprocal single-stranded crossover between two homologous DNA duplexes (Holliday junction).. In terms of biological role, endonuclease that resolves Holliday junction intermediates in genetic recombination. Cleaves mobile four-strand junctions by introducing symmetrical nicks in paired strands. Promotes annealing of linear ssDNA with homologous dsDNA. Required for DNA repair, homologous recombination and chromosome segregation. The sequence is that of Holliday junction resolvase RecU from Lactiplantibacillus plantarum (strain ATCC BAA-793 / NCIMB 8826 / WCFS1) (Lactobacillus plantarum).